An 82-amino-acid polypeptide reads, in one-letter code: MKIRKANINTQTGMITDVYLHENRKELRTLVAVPQLEWSTIISYEEDKATLPERLEASLRRHTEETPAGELAKKIIHWVTEM.

This is an uncharacterized protein from Bacillus subtilis (strain 168).